The primary structure comprises 163 residues: Putative 4-hydroxy-4-methyl-2-oxoglutarate aldolase (163 aa).

Substrate-binding positions include 79-82 (GDQL) and arginine 101. Residue aspartate 102 coordinates a divalent metal cation.

Belongs to the class II aldolase/RraA-like family. In terms of assembly, homotrimer. A divalent metal cation is required as a cofactor.

The catalysed reaction is 4-hydroxy-4-methyl-2-oxoglutarate = 2 pyruvate. The enzyme catalyses oxaloacetate + H(+) = pyruvate + CO2. Its function is as follows. Catalyzes the aldol cleavage of 4-hydroxy-4-methyl-2-oxoglutarate (HMG) into 2 molecules of pyruvate. Also contains a secondary oxaloacetate (OAA) decarboxylase activity due to the common pyruvate enolate transition state formed following C-C bond cleavage in the retro-aldol and decarboxylation reactions. The sequence is that of Putative 4-hydroxy-4-methyl-2-oxoglutarate aldolase from Dechloromonas aromatica (strain RCB).